An 84-amino-acid chain; its full sequence is PAMP-induced secreted peptide 2 (84 aa).

A signal peptide spans 1 to 24; it reads MMMNKNVLSSILFFMLIGSVLVES. Residues 50-84 form a disordered region; sequence KDSGPSPGEGHKVVDRKDTFRFVKHSGPSPSGPGH. The segment covering 58 to 70 has biased composition (basic and acidic residues); the sequence is EGHKVVDRKDTFR. Pro-77 and Pro-79 each carry 4-hydroxyproline.

Contains 4-hydroxyproline; hydroxylated on Pro-77 and Pro-79.

It localises to the secreted. The protein resides in the extracellular space. It is found in the apoplast. In terms of biological role, endogenous secreted peptide that acts as elicitor of immune response and positive regulator of defense response. Amplifies the immune response triggered by flg22, the active epitope of bacterial flagellin. Acts as a negative regulator of root growth. This Arabidopsis thaliana (Mouse-ear cress) protein is PAMP-induced secreted peptide 2.